A 344-amino-acid chain; its full sequence is uncharacterized protein (344 aa).

Helical transmembrane passes span 53-73 (FVVG…VSVW), 84-104 (WPIL…GYNI), 153-173 (IYPL…LYLL), 189-209 (FGAW…LEML), and 275-295 (IASE…VGVF).

This sequence belongs to the steroid 5-alpha reductase family.

The protein localises to the endoplasmic reticulum membrane. This is an uncharacterized protein from Schizosaccharomyces pombe (strain 972 / ATCC 24843) (Fission yeast).